A 907-amino-acid chain; its full sequence is Eukaryotic translation initiation factor 4 gamma 2 (907 aa).

Methionine 1 is modified (N-acetylmethionine). The interval 1-71 (MESAIAEGGA…SAANNSANEK (71 aa)) is disordered. Phosphoserine is present on serine 11. Positions 78 to 308 (FRKVRGILNK…QDTVELREHH (231 aa)) constitute an MIF4G domain. At threonine 89 the chain carries Phosphothreonine. Arginine 360 carries the post-translational modification Omega-N-methylarginine. Serine 395 is subject to Phosphoserine. An N6-methyllysine modification is found at lysine 431. Residue serine 443 is modified to Phosphoserine. The segment at 498-541 (PPSAQPPRTQTPPLGQTPQLGLKTNPPLIQEKPAKTSKKPPPSK) is disordered. A compositionally biased stretch (polar residues) spans 503–516 (PPRTQTPPLGQTPQ). Omega-N-methylarginine is present on arginine 505. A phosphothreonine mark is found at threonine 508 and threonine 514. Positions 543–666 (ELLKLTETVV…SISELAQPLE (124 aa)) constitute an MI domain. Lysine 575 is covalently cross-linked (Glycyl lysine isopeptide (Lys-Gly) (interchain with G-Cter in SUMO2)). Residues 720–904 (EGKGLSFLFP…ETAEEEESEE (185 aa)) enclose the W2 domain. Serine 902 carries the post-translational modification Phosphoserine.

This sequence belongs to the eukaryotic initiation factor 4G family. In terms of assembly, interacts with the serine/threonine protein kinases MKNK1 and MKNK2. Binds EIF4A and EIF3. Interacts with MIF4GD. Interacts with DAZAP2. Phosphorylation; hyperphosphorylated during mitosis.

Functionally, appears to play a role in the switch from cap-dependent to IRES-mediated translation during mitosis, apoptosis and viral infection. Cleaved by some caspases and viral proteases. The sequence is that of Eukaryotic translation initiation factor 4 gamma 2 from Oryctolagus cuniculus (Rabbit).